The primary structure comprises 1522 residues: Rho guanine nucleotide exchange factor 11 (1522 aa).

The tract at residues 1-40 (MSVRLPQSIDRLSSLSSLGDSAPERKSPSHHRQPSDASET) is disordered. A phosphoserine mark is found at serine 2, serine 14, serine 16, and serine 35. Positions 47 to 126 (CVIIQKDQHG…LTLLGSSPSS (80 aa)) constitute a PDZ domain. Disordered stretches follow at residues 128 to 175 (GISG…PEVQ) and 200 to 231 (YGDT…ERFP). Over residues 149-161 (PSPPPPPPLPPPQ) the composition is skewed to pro residues. Phosphoserine occurs at positions 245 and 251. Threonine 254 is modified (phosphothreonine). 2 positions are modified to phosphoserine: serine 255 and serine 271. The disordered stretch occupies residues 263–286 (AQHHRRQGSDAAVPSTGDQGVDQS). Positions 306-486 (ESDIIFQDLE…NTYMSHAGIR (181 aa)) constitute an RGSL domain. The stretch at 444–470 (LRERQVAEKQLAALGDILSKYEEDRSA) forms a coiled coil. Residues 490-555 (ARPSNTAEKA…SSQSTFHIPL (66 aa)) are disordered. Residues 521–533 (SKKEKDALEDKKR) are compositionally biased toward basic and acidic residues. Phosphoserine is present on residues serine 556, serine 635, and serine 663. The interval 573 to 680 (ENNQQYDAPE…FTPKMGRRSI (108 aa)) is disordered. The segment covering 601–637 (DSSRSEIRLGRSESLKGREEMKRSRKAENVPRSRSDV) has biased composition (basic and acidic residues). A compositionally biased stretch (low complexity) spans 651–664 (SASSSTSSLSTRSL). Threonine 668 and threonine 672 each carry phosphothreonine. The DH domain occupies 734–923 (DRQEVINELF…REILKYVNEA (190 aa)). Residues 965–1079 (KMIHEGPLTW…WMELLEEAVR (115 aa)) enclose the PH domain. The segment at 1084–1141 (HPGAAPMPVHPPPPGPREPAQQGPTPSRVELDDSDVFHGEPEPEELPGGTGSQQRVQG) is disordered. Positions 1091–1100 (PVHPPPPGPR) are enriched in pro residues. Positions 1112 to 1124 (VELDDSDVFHGEP) are enriched in basic and acidic residues. Phosphoserine is present on serine 1155. 3 disordered regions span residues 1223–1320 (ETQA…AGGY), 1332–1423 (KVVP…RDVG), and 1453–1522 (LGGE…SPGP). Residues 1236-1245 (PTPSVISVTS) are compositionally biased toward polar residues. Serine 1295 and serine 1300 each carry phosphoserine. The segment covering 1338–1353 (PESGQSEPGPPEVEGG) has biased composition (low complexity). Residues serine 1457 and serine 1458 each carry the phosphoserine modification. A phosphothreonine mark is found at threonine 1462 and threonine 1475. Serine 1480 carries the post-translational modification Phosphoserine. Positions 1503 to 1513 (DGSDAPLEDST) are enriched in acidic residues.

As to quaternary structure, interacts with GNA12 and GNA13 through the RGS domain. Interacts with RHOA, PLXNB1 and PLXNB2. Interacts with SLC1A6. Interacts (via DH domain) with GCSAM (via C-terminus). Found in a complex with ARHGEF11 and ARHGEF12; binding to ARHGEF11 and ARHGEF12 enhances CDC42 GEF activity of PLEKHG4B, and PLEKHG4B, in turn, inhibits ARHGEF11- and ARHGEF12-mediated RHOA activation. In terms of processing, phosphorylated by MAP kinase p38 (MAPK11, MAPK12, MAPK13 and/or MAPK14). Post-translationally, ubiquitinated by the BCR(KLHL20) E3 ubiquitin ligase complex when previously phosphorylated by MAP kinase p38 (MAPK11, MAPK12, MAPK13 and/or MAPK14), leading to its degradation, thereby restricting RhoA activity and facilitating growth cone spreading and neurite outgrowth. As to expression, ubiquitously expressed.

It is found in the cytoplasm. The protein localises to the membrane. May play a role in the regulation of RhoA GTPase by guanine nucleotide-binding alpha-12 (GNA12) and alpha-13 (GNA13). Acts as guanine nucleotide exchange factor (GEF) for RhoA GTPase and may act as GTPase-activating protein (GAP) for GNA12 and GNA13. Involved in neurotrophin-induced neurite outgrowth. The protein is Rho guanine nucleotide exchange factor 11 (ARHGEF11) of Homo sapiens (Human).